The primary structure comprises 796 residues: Choline transporter-like 2 (796 aa).

N-linked (GlcNAc...) asparagine glycosylation is present at Asn-20. A helical transmembrane segment spans residues Pro-35 to Ile-55. Residues Asn-209 and Asn-284 are each glycosylated (N-linked (GlcNAc...) asparagine). 4 helical membrane-spanning segments follow: residues Trp-304–Leu-324, Ile-332–Val-352, Leu-386–Leu-406, and Val-431–Val-451. N-linked (GlcNAc...) asparagine glycans are attached at residues Asn-488 and Asn-520. Transmembrane regions (helical) follow at residues Val-542–Ser-562, Phe-585–Ile-605, Ala-626–Phe-648, Phe-691–Phe-711, and Ile-724–Gly-744.

Belongs to the CTL (choline transporter-like) family.

The protein localises to the membrane. The chain is Choline transporter-like 2 from Drosophila melanogaster (Fruit fly).